A 198-amino-acid polypeptide reads, in one-letter code: Recombination protein RecR (198 aa).

The C4-type zinc-finger motif lies at Cys57–Cys72. The Toprim domain maps to Gln80 to Pro175.

Belongs to the RecR family.

Functionally, may play a role in DNA repair. It seems to be involved in an RecBC-independent recombinational process of DNA repair. It may act with RecF and RecO. This is Recombination protein RecR from Protochlamydia amoebophila (strain UWE25).